We begin with the raw amino-acid sequence, 199 residues long: uncharacterized protein (199 aa).

The protein to M.jannaschii MJ1356.

This is an uncharacterized protein from Methanocaldococcus jannaschii (strain ATCC 43067 / DSM 2661 / JAL-1 / JCM 10045 / NBRC 100440) (Methanococcus jannaschii).